Reading from the N-terminus, the 335-residue chain is Methyltransferase pgmE (335 aa).

It belongs to the methyltransferase superfamily.

It participates in pigment biosynthesis. It functions in the pathway secondary metabolite biosynthesis. Functionally, methyltransferase; part of the gene cluster that mediates the biosynthesis of pleosporalin A, ascomycone A, as well as a third cryptic naphthoquinone derived pigment, all responsible for the coloration of conidia. Essential for the production of pleosporalin A, but not the 2 other final products. The pathway begins with the biosynthesis of the cyclized heptaketide 3-acetonyl-1,6,8-trihydroxy-2-naphthaldehyde by the NR-PKS pgmA. The C-6 hydroxyl group is further methylated by the O-methyltransferase pgmB to yield fusarubinaldehyde which is in turn oxidized by the cytochrome P450 monooxygenase pgmC at C-9. The C-1 hydroxyl group is then methylated spontaneously. Although pgmE, pgmD and pgmH are essential for the production of pleosporalin A, it is not the case for the 2 other final products and it remains difficult to assign a specific function to each enzyme. PgmF and pgmG seem not to be involved in pigment biosynthesis although they were regulated by the cluster-specific transcription factor pgmR. This is Methyltransferase pgmE from Aspergillus terreus.